Consider the following 81-residue polypeptide: Cytochrome c oxidase subunit 7B2, mitochondrial (81 aa).

A mitochondrion-targeting transit peptide spans 1–25 (MMFPLARNALSSLKIRSILQSMARQ). The Mitochondrial matrix portion of the chain corresponds to 26–33 (SHVKHSPD). The helical transmembrane segment at 34 to 60 (FHDKYGNAVLASGTAFCVVAWVFTATQ) threads the bilayer. At 61 to 81 (IGIEWNLSPVGRVTPKEWKHQ) the chain is on the mitochondrial intermembrane side.

It belongs to the cytochrome c oxidase VIIb family. In terms of assembly, component of the cytochrome c oxidase (complex IV, CIV), a multisubunit enzyme composed of 14 subunits. The complex is composed of a catalytic core of 3 subunits MT-CO1, MT-CO2 and MT-CO3, encoded in the mitochondrial DNA, and 11 supernumerary subunits COX4I, COX5A, COX5B, COX6A, COX6B, COX6C, COX7A, COX7B, COX7C, COX8 and NDUFA4, which are encoded in the nuclear genome. The complex exists as a monomer or a dimer and forms supercomplexes (SCs) in the inner mitochondrial membrane with NADH-ubiquinone oxidoreductase (complex I, CI) and ubiquinol-cytochrome c oxidoreductase (cytochrome b-c1 complex, complex III, CIII), resulting in different assemblies (supercomplex SCI(1)III(2)IV(1) and megacomplex MCI(2)III(2)IV(2)).

The protein localises to the mitochondrion inner membrane. The protein operates within energy metabolism; oxidative phosphorylation. Component of the cytochrome c oxidase, the last enzyme in the mitochondrial electron transport chain which drives oxidative phosphorylation. The respiratory chain contains 3 multisubunit complexes succinate dehydrogenase (complex II, CII), ubiquinol-cytochrome c oxidoreductase (cytochrome b-c1 complex, complex III, CIII) and cytochrome c oxidase (complex IV, CIV), that cooperate to transfer electrons derived from NADH and succinate to molecular oxygen, creating an electrochemical gradient over the inner membrane that drives transmembrane transport and the ATP synthase. Cytochrome c oxidase is the component of the respiratory chain that catalyzes the reduction of oxygen to water. Electrons originating from reduced cytochrome c in the intermembrane space (IMS) are transferred via the dinuclear copper A center (CU(A)) of subunit 2 and heme A of subunit 1 to the active site in subunit 1, a binuclear center (BNC) formed by heme A3 and copper B (CU(B)). The BNC reduces molecular oxygen to 2 water molecules using 4 electrons from cytochrome c in the IMS and 4 protons from the mitochondrial matrix. The protein is Cytochrome c oxidase subunit 7B2, mitochondrial (COX7B2) of Macaca fascicularis (Crab-eating macaque).